The sequence spans 197 residues: Phospholipid hydroperoxide glutathione peroxidase (197 aa).

Phosphoserine is present on serine 40. Residue selenocysteine 73 is part of the active site. Position 73 (selenocysteine 73) is a non-standard amino acid, selenocysteine.

This sequence belongs to the glutathione peroxidase family. Monomer. Has a tendency to form higher mass oligomers. Interacts with FUNDC1; this interaction promotes GPX4 recruitment into mitochondria through TOM/TIM complex where it is degraded by mitophagy. In terms of tissue distribution, expressed in testis. Also expressed in liver, lung, kidney and spinal cord.

It is found in the mitochondrion. The protein localises to the cytoplasm. The enzyme catalyses a hydroperoxy polyunsaturated fatty acid + 2 glutathione = a hydroxy polyunsaturated fatty acid + glutathione disulfide + H2O. It carries out the reaction 2 glutathione + H2O2 = glutathione disulfide + 2 H2O. It catalyses the reaction tert-butyl hydroperoxide + 2 glutathione = tert-butanol + glutathione disulfide + H2O. The catalysed reaction is cumene hydroperoxide + 2 glutathione = 2-phenylpropan-2-ol + glutathione disulfide + H2O. The enzyme catalyses (9S)-hydroperoxy-(10E,12Z)-octadecadienoate + 2 glutathione = (9S)-hydroxy-(10E,12Z)-octadecadienoate + glutathione disulfide + H2O. It carries out the reaction (13S)-hydroperoxy-(9Z,11E)-octadecadienoate + 2 glutathione = (13S)-hydroxy-(9Z,11E)-octadecadienoate + glutathione disulfide + H2O. It catalyses the reaction (5S)-hydroperoxy-(6E,8Z,11Z,14Z)-eicosatetraenoate + 2 glutathione = (5S)-hydroxy-(6E,8Z,11Z,14Z)-eicosatetraenoate + glutathione disulfide + H2O. The catalysed reaction is (12R)-hydroperoxy-(5Z,8Z,10E,14Z)-eicosatetraenoate + 2 glutathione = (12R)-hydroxy-(5Z,8Z,10E,14Z)-eicosatetraenoate + glutathione disulfide + H2O. The enzyme catalyses (12S)-hydroperoxy-(5Z,8Z,10E,14Z)-eicosatetraenoate + 2 glutathione = (12S)-hydroxy-(5Z,8Z,10E,14Z)-eicosatetraenoate + glutathione disulfide + H2O. It carries out the reaction (15S)-hydroperoxy-(5Z,8Z,11Z,13E)-eicosatetraenoate + 2 glutathione = (15S)-hydroxy-(5Z,8Z,11Z,13E)-eicosatetraenoate + glutathione disulfide + H2O. It catalyses the reaction (5S)-hydroperoxy-(6E,8Z,11Z,14Z,17Z)-eicosapentaenoate + 2 glutathione = (5S)-hydroxy-(6E,8Z,11Z,14Z,17Z)-eicosapentaenoate + glutathione disulfide + H2O. The catalysed reaction is (12S)-hydroperoxy-(5Z,8Z,10E,14Z,17Z)-eicosapentaenoate + 2 glutathione = (12S)-hydroxy-(5Z,8Z,10E,14Z,17Z)-eicosapentaenoate + glutathione disulfide + H2O. The enzyme catalyses (15S)-hydroperoxy-(5Z,8Z,11Z,13E,17Z)-eicosapentaenoate + 2 glutathione = (15S)-hydroxy-(5Z,8Z,11Z,13E,17Z)-eicosapentaenoate + glutathione disulfide + H2O. It carries out the reaction (15S)-hydroperoxy-(11Z,13E)-eicosadienoate + 2 glutathione = (15S)-hydroxy-(11Z,13E)-eicosadienoate + glutathione disulfide + H2O. It catalyses the reaction (17S)-hydroperoxy-(4Z,7Z,10Z,13Z,15E,19Z)-docosahexaenoate + 2 glutathione = (17S)-hydroxy-(4Z,7Z,10Z,13Z,15E,19Z)-docosahexaenoate + glutathione disulfide + H2O. The catalysed reaction is a hydroperoxy-1,2-diacyl-glycero-3-phosphocholine + 2 glutathione = a hydroxy-1,2-diacyl-glycero-3-phosphocholine + glutathione disulfide + H2O. Its function is as follows. Essential antioxidant peroxidase that directly reduces phospholipid hydroperoxide even if they are incorporated in membranes and lipoproteins. Can also reduce fatty acid hydroperoxide, cholesterol hydroperoxide and thymine hydroperoxide. Plays a key role in protecting cells from oxidative damage by preventing membrane lipid peroxidation. Required to prevent cells from ferroptosis, a non-apoptotic cell death resulting from an iron-dependent accumulation of lipid reactive oxygen species. The presence of selenocysteine (Sec) versus Cys at the active site is essential for life: it provides resistance to overoxidation and prevents cells against ferroptosis. The presence of Sec at the active site is also essential for the survival of a specific type of parvalbumin-positive interneurons, thereby preventing against fatal epileptic seizures. May be required to protect cells from the toxicity of ingested lipid hydroperoxides. Required for normal sperm development and male fertility. Essential for maturation and survival of photoreceptor cells. Plays a role in a primary T-cell response to viral and parasitic infection by protecting T-cells from ferroptosis and by supporting T-cell expansion. Plays a role of glutathione peroxidase in platelets in the arachidonic acid metabolism. Reduces hydroperoxy ester lipids formed by a 15-lipoxygenase that may play a role as down-regulator of the cellular 15-lipoxygenase pathway. Can also reduce small soluble hydroperoxides such as H2O2, cumene hydroperoxide and tert-butyl hydroperoxide. The chain is Phospholipid hydroperoxide glutathione peroxidase from Callithrix jacchus (White-tufted-ear marmoset).